The chain runs to 317 residues: Methionyl-tRNA formyltransferase (317 aa).

A (6S)-5,6,7,8-tetrahydrofolate-binding site is contributed by 112-115 (SILP).

Belongs to the Fmt family.

The enzyme catalyses L-methionyl-tRNA(fMet) + (6R)-10-formyltetrahydrofolate = N-formyl-L-methionyl-tRNA(fMet) + (6S)-5,6,7,8-tetrahydrofolate + H(+). Its function is as follows. Attaches a formyl group to the free amino group of methionyl-tRNA(fMet). The formyl group appears to play a dual role in the initiator identity of N-formylmethionyl-tRNA by promoting its recognition by IF2 and preventing the misappropriation of this tRNA by the elongation apparatus. This is Methionyl-tRNA formyltransferase from Actinobacillus succinogenes (strain ATCC 55618 / DSM 22257 / CCUG 43843 / 130Z).